The following is a 499-amino-acid chain: Alpha-amylase A type-3 (499 aa).

The first 21 residues, 1 to 21, serve as a signal peptide directing secretion; that stretch reads MMVAWWSLFLYGLQVAAPALA. The cysteines at positions 51 and 59 are disulfide-linked. Residue tryptophan 104 participates in substrate binding. Asparagine 142 lines the Ca(2+) pocket. Position 143 (histidine 143) interacts with substrate. Cysteine 171 and cysteine 185 are oxidised to a cystine. The Ca(2+) site is built by glutamate 183 and aspartate 196. Residue asparagine 218 is glycosylated (N-linked (GlcNAc...) asparagine). Position 225 (arginine 225) interacts with substrate. 3 residues coordinate Ca(2+): aspartate 227, histidine 231, and glutamate 251. Aspartate 227 (nucleophile) is an active-site residue. 230–231 is a binding site for substrate; sequence KH. Glutamate 251 functions as the Proton donor in the catalytic mechanism. Position 255 (glycine 255) interacts with substrate. A disulfide bond links cysteine 261 and cysteine 304. Arginine 365 serves as a coordination point for substrate. The cysteines at positions 461 and 496 are disulfide-linked.

The protein belongs to the glycosyl hydrolase 13 family. Monomer. The cofactor is Ca(2+).

The protein localises to the secreted. The catalysed reaction is Endohydrolysis of (1-&gt;4)-alpha-D-glucosidic linkages in polysaccharides containing three or more (1-&gt;4)-alpha-linked D-glucose units.. In Aspergillus oryzae (strain ATCC 42149 / RIB 40) (Yellow koji mold), this protein is Alpha-amylase A type-3 (amy3).